The chain runs to 1046 residues: MFSFTEAKSKISLWTRSAAPLNNVYLSYSCRCGLGKRKLAGGCCSAPYITCYDSADFRRVQYLYFCLTRYCCLYFFLLLLADWFYKKSSIFFETEFSRGFRTWRKIVKLLYILPKFEMESIMSRGIPSGILEEKAIQFKRAKEGNKPLKDEIPKPEDMYVSHTSKWNVLRKMSQKTVDLSKAAAGMGFINKHMLTGNILAQPTTVLDIPVTKDKTLAMASDFIRKENLKTSAIHIGAIEIIIQSFASPESDLMGGFLLVDSLHTDTANAIRSIFVAPMRGGRPVRVVTFPNTLAPVSCDLNNRFKLICSLPNCDIVQGSQVAEVSVNVAGCATSIEKSHTPSQLYTEEFEKEGAVVVEYLGRQTYCAQPSNLPTEEKLRSLKFDFHVEQPSVLKLSNSCNAHFVKGESLKYSISGKEAENHAVHATVVSREGASAAPKQYDPILGRVLDPRNGNVAFPQMEQNLFALSLDDTSSVRGSLLDTKFAQTRVLLSKAMAGGDVLLDEYLYDVVNGQDFRATVAFLRTHVITGKIKVTATTNISDNSGCCLMLAINSGVRGKYSTDVYTICSQDSMTWNPGCKKNFSFTFNPNPCGDSWSAEMISRSRVRMTVICVSGWTLSPTTDVIAKLDWSIVNEKCEPTIYHLADCQNWLPLNRWMGKLTFPQGVTSEVRRMPLSIGGGAGATQAFLANMPNSWISMWRYFRGELHFEVTKMSSPYIKATVTFLIAFGNLSDAFGFYESFPHRIVQFAEVEEKCTLVFSQQEFVTAWSTQVNPRTTLEADGCPYLYAIIHDSTTGTISGDFNLGVKLVGIKDFCGIGSNPGIDGSRLLGAIAQGPVCAEASDVYSPCMIASTPPAPFSDVTAVTFDLINGKITPVGDDNWNTHIYNPPIMNVLRTAAWKSGTIHVQLNVRGAGVKRADWDGQVFVYLRQSMNPESYDARTFVISQPGSAMLNFSFDIIGPNSGFEFAESPWANQTTWYLECVATNPRQIQQFEVNMRFDPNFRVAGNILMPPFPLSTETPPLLKFRFRDIERSKRSVMVGHTATAA.

The hydrophobic stretch occupies residues 62–84; the sequence is YLYFCLTRYCCLYFFLLLLADWF. The interval 409-415 is involved in tubule formation by the movement protein; it reads LKYSISG. Residue methionine 460 is modified to N-acetylmethionine; by host.

In terms of assembly, interacts with the large capsid protein. Interacts with the mature small capsid protein. Homomultimer; assembles as pentons. Interacts with the movement protein (via C-terminus). As to quaternary structure, interacts (via C-terminus) with the large capsid protein. In terms of processing, specific enzymatic cleavages by picornain 3C-like protease in vivo yield mature proteins. The C-terminal 24 amino acids of the small capsid protein are specifically cleaved by the RNA1 encoded picornain 3C-like protease during maturation. Post-translationally, not glycosylated.

It is found in the host nucleus. It localises to the host cell junction. The protein resides in the host plasmodesma. Its subcellular location is the virion. Its function is as follows. Responsible for viral RNA2 accumulation. May function by recruiting the RNA1-encoded polyprotein that contains the replication protein to RNA2 and enable its replication. Transports the viral genome to neighboring plant cells directly through plasmosdesmata, without any budding. The movement protein allows efficient cell to cell propagation, by bypassing the host cell wall barrier. Acts by forming a tubular structure at the host plasmodesmata, enlarging it enough to allow free passage of virion capsids. Binds to GTP and to single-stranded RNA and single-stranded DNA in a non-sequence-specific manner. Functionally, together with the mature small capsid protein, forms an icosahedral capsid (T=3) enclosing the viral positive strand RNA genome, with a diameter of approximately 300 Angstroms. The capsid is formed from 60 copies each of the large and the small capsid protein. The large capsid protein interacts with the viral RNA. In terms of biological role, together with the large capsid protein, forms an icosahedral capsid (T=3) enclosing the viral positive strand RNA genome, with a diameter of approximately 300 Angstroms. The capsid is formed from 60 copies each of the large and the small capsid protein. The mature small capsid protein forms the turrets at the fivefold axes of the viral particle. Its function is as follows. The cleavable C-terminus of small capsid protein seems to be involved in viral assembly and RNA packaging. After virus assembly, these amino acids are cleaved off during the normal maturation of the virus. Also seems to act as suppressor of post-transcriptional gene silencing (PTGS), a mechanism of plant viral defense that limits the accumulation of viral RNAs. Acts as a suppressor of RNA-mediated gene silencing, also known as post-transcriptional gene silencing (PTGS), a mechanism of plant viral defense that limits the accumulation of viral RNAs. The sequence is that of RNA2 polyprotein from Cajanus cajan (Pigeon pea).